A 679-amino-acid chain; its full sequence is Enzymatic polyprotein (679 aa).

Residues 40–130 form a protease region; it reads LHCFVDTGAS…LYEPFIQFTD (91 aa). D45 is a catalytic residue. The Reverse transcriptase domain maps to 272–452; that stretch reads LKVIKPSKSP…KKINFLGLEI (181 aa).

This sequence belongs to the caulimoviridae enzymatic polyprotein family.

It carries out the reaction DNA(n) + a 2'-deoxyribonucleoside 5'-triphosphate = DNA(n+1) + diphosphate. Functionally, encodes for at least two polypeptides: protease (PR) and reverse transcriptase (RT). The protease processes the polyprotein in cis. Reverse transcriptase is multifunctional enzyme that converts the viral RNA genome into dsDNA in viral cytoplasmic capsids. This enzyme displays a DNA polymerase activity that can copy either DNA or RNA templates, and a ribonuclease H (RNase H) activity that cleaves the RNA strand of RNA-DNA heteroduplexes in a partially processive 3'- to 5'-endonucleasic mode. Neo-synthesized pregenomic RNA (pgRNA) are encapsidated, and reverse-transcribed inside the nucleocapsid. Partial (+)DNA is synthesized from the (-)DNA template and generates the relaxed circular DNA (RC-DNA) genome. After budding and infection, the RC-DNA migrates in the nucleus, and is converted into a plasmid-like covalently closed circular DNA (cccDNA). The polypeptide is Enzymatic polyprotein (Cauliflower mosaic virus (strain BBC) (CaMV)).